The chain runs to 110 residues: Large ribosomal subunit protein P2B (110 aa).

Positions 73–88 (TPAAGGAAGAEATSAA) are enriched in low complexity. Residues 73-110 (TPAAGGAAGAEATSAAEEAKEEEAAEESDEDMGFGLFD) form a disordered region. A compositionally biased stretch (acidic residues) spans 91–104 (AKEEEAAEESDEDM). At serine 100 the chain carries Phosphoserine.

Belongs to the eukaryotic ribosomal protein P1/P2 family. Component of the large ribosomal subunit (LSU). Mature yeast ribosomes consist of a small (40S) and a large (60S) subunit. The 40S small subunit contains 1 molecule of ribosomal RNA (18S rRNA) and at least 33 different proteins. The large 60S subunit contains 3 rRNA molecules (25S, 5.8S and 5S rRNA) and at least 46 different proteins. The acidic ribosomal P-proteins form the stalk structure of the 60S subunit. They are organized as a pentameric complex in which uL10/P0 interacts with 2 heterodimers of P1 and P2 proteins.

It localises to the cytoplasm. In terms of biological role, component of the ribosome, a large ribonucleoprotein complex responsible for the synthesis of proteins in the cell. The small ribosomal subunit (SSU) binds messenger RNAs (mRNAs) and translates the encoded message by selecting cognate aminoacyl-transfer RNA (tRNA) molecules. The large subunit (LSU) contains the ribosomal catalytic site termed the peptidyl transferase center (PTC), which catalyzes the formation of peptide bonds, thereby polymerizing the amino acids delivered by tRNAs into a polypeptide chain. The nascent polypeptides leave the ribosome through a tunnel in the LSU and interact with protein factors that function in enzymatic processing, targeting, and the membrane insertion of nascent chains at the exit of the ribosomal tunnel. This chain is Large ribosomal subunit protein P2B (rpp202), found in Schizosaccharomyces pombe (strain 972 / ATCC 24843) (Fission yeast).